We begin with the raw amino-acid sequence, 748 residues long: Catalase-peroxidase (748 aa).

A compositionally biased stretch (basic and acidic residues) spans 1–14 (MTDTSDARPPHSDA). The interval 1-40 (MTDTSDARPPHSDAKTASNSESENPAIDSPEPKSHAPLTN) is disordered. The segment at residues 112 to 239 (WHAAGTYRIF…FGATTMGLIY (128 aa)) is a cross-link (tryptophyl-tyrosyl-methioninium (Trp-Tyr) (with M-265)). His-113 functions as the Proton acceptor in the catalytic mechanism. The segment at residues 239 to 265 (YVNPEGPEGKPDPLAAAHDIRETFGRM) is a cross-link (tryptophyl-tyrosyl-methioninium (Tyr-Met) (with W-112)). His-280 is a heme b binding site.

Belongs to the peroxidase family. Peroxidase/catalase subfamily. As to quaternary structure, homodimer or homotetramer. Heme b is required as a cofactor. Formation of the three residue Trp-Tyr-Met cross-link is important for the catalase, but not the peroxidase activity of the enzyme.

The catalysed reaction is H2O2 + AH2 = A + 2 H2O. It carries out the reaction 2 H2O2 = O2 + 2 H2O. Its function is as follows. Bifunctional enzyme with both catalase and broad-spectrum peroxidase activity. The chain is Catalase-peroxidase from Mycolicibacterium gilvum (strain PYR-GCK) (Mycobacterium gilvum (strain PYR-GCK)).